The sequence spans 100 residues: uncharacterized protein (100 aa).

The chain crosses the membrane as a helical span at residues 13-32 (IWSSLNIICLMVTFLNVQLS).

It localises to the mitochondrion membrane. This is an uncharacterized protein from Schizosaccharomyces pombe (strain 972 / ATCC 24843) (Fission yeast).